We begin with the raw amino-acid sequence, 420 residues long: Torsin-4A (420 aa).

The helical transmembrane segment at 130-150 (CLLLFIAIVCFQIFNAIENLD) threads the bilayer. 202–209 (GPSGVGKS) is a binding site for ATP.

The protein belongs to the ClpA/ClpB family. Torsin subfamily.

Its subcellular location is the membrane. The protein is Torsin-4A (tor4a) of Xenopus tropicalis (Western clawed frog).